We begin with the raw amino-acid sequence, 430 residues long: Histidine--tRNA ligase (430 aa).

Belongs to the class-II aminoacyl-tRNA synthetase family. As to quaternary structure, homodimer.

The protein localises to the cytoplasm. The catalysed reaction is tRNA(His) + L-histidine + ATP = L-histidyl-tRNA(His) + AMP + diphosphate + H(+). This Acinetobacter baylyi (strain ATCC 33305 / BD413 / ADP1) protein is Histidine--tRNA ligase.